We begin with the raw amino-acid sequence, 420 residues long: Histidine--tRNA ligase (420 aa).

Belongs to the class-II aminoacyl-tRNA synthetase family. As to quaternary structure, homodimer.

It is found in the cytoplasm. It catalyses the reaction tRNA(His) + L-histidine + ATP = L-histidyl-tRNA(His) + AMP + diphosphate + H(+). In Ureaplasma parvum serovar 3 (strain ATCC 27815 / 27 / NCTC 11736), this protein is Histidine--tRNA ligase.